A 385-amino-acid polypeptide reads, in one-letter code: MAIKHLFTSESVSEGHPDKIADQISDAVLDAIFEQDPKARVACETYVKTGMVMVGGEITTSAWVDIEEITRQTVREIGYVHSDMGFDANSCAVLNTIGKQSPDINQGVDKADPKEQGAGDQGIMFGYATNETEVLMPAPITYAHRLMQRQAEVRKNGTLPWLRPDAKSQVTFQYDQGKIVGIDAVVLSTQHSDSISTADLREAVMEEIIKPVLPAEWLSKETKYFINPTGRFVIGGPMGDCGLTGRKIIVDTYGGAARHGGGAFSGKDPSKVDRSAAYAARYVAKNIVAAGMADRCEIQLSYAIGVADPTSIMVETFGTEKVSQEIIIEAVRQFFDLRPYGLQEMLNLLQPIYKKTAAYGHFGREEFPWEATDKAALLRDFAGLK.

Residue H16 participates in ATP binding. Residue D18 participates in Mg(2+) binding. E44 serves as a coordination point for K(+). L-methionine contacts are provided by E57 and Q100. The interval 100–110 (QSPDINQGVDK) is flexible loop. ATP contacts are provided by residues 165–167 (DAK), 231–232 (RF), D240, 246–247 (RK), A263, and K267. D240 is a binding site for L-methionine. K271 provides a ligand contact to L-methionine.

Belongs to the AdoMet synthase family. In terms of assembly, homotetramer; dimer of dimers. Mg(2+) is required as a cofactor. The cofactor is K(+).

It is found in the cytoplasm. The catalysed reaction is L-methionine + ATP + H2O = S-adenosyl-L-methionine + phosphate + diphosphate. It participates in amino-acid biosynthesis; S-adenosyl-L-methionine biosynthesis; S-adenosyl-L-methionine from L-methionine: step 1/1. Catalyzes the formation of S-adenosylmethionine (AdoMet) from methionine and ATP. The overall synthetic reaction is composed of two sequential steps, AdoMet formation and the subsequent tripolyphosphate hydrolysis which occurs prior to release of AdoMet from the enzyme. This chain is S-adenosylmethionine synthase, found in Vibrio cholerae serotype O1 (strain ATCC 39541 / Classical Ogawa 395 / O395).